A 125-amino-acid chain; its full sequence is Large ribosomal subunit protein bL12 (125 aa).

It belongs to the bacterial ribosomal protein bL12 family. Homodimer. Part of the ribosomal stalk of the 50S ribosomal subunit. Forms a multimeric L10(L12)X complex, where L10 forms an elongated spine to which 2 to 4 L12 dimers bind in a sequential fashion. Binds GTP-bound translation factors.

Its function is as follows. Forms part of the ribosomal stalk which helps the ribosome interact with GTP-bound translation factors. Is thus essential for accurate translation. The sequence is that of Large ribosomal subunit protein bL12 from Hyphomonas neptunium (strain ATCC 15444).